A 353-amino-acid chain; its full sequence is D-glycerol 3-phosphate phosphatase (353 aa).

Asp14 serves as the catalytic Nucleophile. Residues Asp14, Asp16, and Asp209 each coordinate Mg(2+). Asp16 functions as the Proton donor in the catalytic mechanism.

This sequence belongs to the HAD-like hydrolase superfamily. As to quaternary structure, homodimer. It depends on Mg(2+) as a cofactor. Co(2+) is required as a cofactor. Mn(2+) serves as cofactor.

The catalysed reaction is sn-glycerol 1-phosphate + H2O = glycerol + phosphate. It participates in glycerolipid metabolism. Its function is as follows. Dephosphorylates D-glycerol 3-phosphate (sn-glycerol 1-phosphate). Is the final enzyme involved in the recycling/catabolism of glycerophospholipid polar heads. To a lesser extent, is also able to act on glycerol 2-phosphate and D-ribulose 5-phosphate, but cannot use D-glyceraldehyde 3-phosphate, dihydroxyacetone-phosphate, UMP or GMP as substrates. The chain is D-glycerol 3-phosphate phosphatase from Mycobacterium tuberculosis (strain ATCC 25618 / H37Rv).